A 167-amino-acid polypeptide reads, in one-letter code: MKRLHKRFLLATFCALFTATLQAADVTITVNGRVVAKPCTIQTKEANVNLGDLYTRNLQQPGSASGWHNITLSLTDCPVETSAVTAIVTGSTDNTGYYKNEGTAENIQIELRDDQDAALKNGDSKTVIVDEITRNAQFPLKARAITVNGNASQGTIEALINVIYTWQ.

Positions 1–23 are cleaved as a signal peptide; that stretch reads MKRLHKRFLLATFCALFTATLQA. Cysteine 39 and cysteine 77 are disulfide-bonded.

The protein belongs to the fimbrial protein family.

Its subcellular location is the fimbrium. This is an uncharacterized protein from Escherichia coli (strain K12).